We begin with the raw amino-acid sequence, 860 residues long: Leucine--tRNA ligase (860 aa).

A 'HIGH' region motif is present at residues 42 to 52 (PYPSGRLHMGH). The 'KMSKS' region motif lies at 619 to 623 (KMSKS). Lys-622 is an ATP binding site.

Belongs to the class-I aminoacyl-tRNA synthetase family.

Its subcellular location is the cytoplasm. It catalyses the reaction tRNA(Leu) + L-leucine + ATP = L-leucyl-tRNA(Leu) + AMP + diphosphate. The polypeptide is Leucine--tRNA ligase (Escherichia coli (strain K12 / MC4100 / BW2952)).